A 266-amino-acid chain; its full sequence is MEVANKTQQKHFVLVHGAGHGAWCWYKLKLLLESSGHKVTAIDLATSGANPKRLDEVDTLKDYCSPLLELMAAIPQDDKVILVGHSYGGFCIALAMDLYPKKISIGVFVASVMPDSTHPPNYFINQYYKWNPVGEDSTDTKVETFGDPDQPRTVIHFGPIYLSTKLYQNCTSEEIELAKFLLRPLSVFSNDLSKLKAFSEEGYGSVRRGYIMCSEDKAVPAGLQHWLIENVGASEVKEIKGADHMPMISKPQELCQCLVEITEKVV.

In terms of domain architecture, AB hydrolase-1 spans 11-121; it reads HFVLVHGAGH…VMPDSTHPPN (111 aa). Active-site residues include Ser86, Asp216, and His244.

The protein belongs to the AB hydrolase superfamily. Homodimer.

The catalysed reaction is 17-dehydropreakuammicine + H2O = norfluorocurarine + methanol + CO2. The protein operates within alkaloid biosynthesis. In terms of biological role, hydrolase involved in the biosynthesis of curare monoterpene indole alkaloids (MIAs), natural products such as diaboline, a pharmacologically active compound used to regulate blood pressure. Curare alkaloids act as animal glycine receptor antagonists. Catalyzes the conversion of dehydropreakuammicine to norfluorocurarine. This chain is Norfluorocurarine synthase 2, found in Strychnos sp.